Reading from the N-terminus, the 236-residue chain is Small ribosomal subunit protein uS2c (236 aa).

This sequence belongs to the universal ribosomal protein uS2 family.

The protein resides in the plastid. This chain is Small ribosomal subunit protein uS2c (rps2), found in Cuscuta exaltata (Tall dodder).